The primary structure comprises 207 residues: Superoxide dismutase [Mn] (207 aa).

The Mn(2+) site is built by H28, H76, D160, and H164.

This sequence belongs to the iron/manganese superoxide dismutase family. As to quaternary structure, homotetramer. It depends on Mn(2+) as a cofactor.

The protein resides in the secreted. It catalyses the reaction 2 superoxide + 2 H(+) = H2O2 + O2. Destroys superoxide anion radicals which are normally produced within the cells and which are toxic to biological systems. This Mycolicibacterium smegmatis (Mycobacterium smegmatis) protein is Superoxide dismutase [Mn] (sodA).